Reading from the N-terminus, the 176-residue chain is PRL-1 phosphatase (176 aa).

The Tyrosine-protein phosphatase domain occupies 13 to 166 (APALIEYKGM…YKPKARLKHK (154 aa)). Residue C109 is the Phosphocysteine intermediate of the active site. C173 carries the cysteine methyl ester modification. A lipid anchor (S-farnesyl cysteine) is attached at C173. Positions 174 to 176 (SVQ) are cleaved as a propeptide — removed in mature form.

It belongs to the protein-tyrosine phosphatase family. In terms of assembly, homotrimer. Interacts with uex, possibly at the plasma membrane. Expressed in the adult head (at protein level). Expressed in neurons in the antennal lobe and V-glomeruli (at protein level). Expressed in dorsocentral neurons (at protein level).

The protein resides in the cytoplasm. It is found in the cell membrane. It localises to the apicolateral cell membrane. The protein localises to the cell projection. Its subcellular location is the axon. It carries out the reaction O-phospho-L-tyrosyl-[protein] + H2O = L-tyrosyl-[protein] + phosphate. In terms of biological role, probable phosphatase. Inhibits growth possibly by negatively regulating Src64B-induced growth. Regulates central nervous system circuit formation and stabilization of synapse-dense terminal arbors. In dorsocentral neurons, regulates synaptogenesis in terminal arbors via modulation of the insulin receptor pathway, likely upstream of Akt1, and via reduction of PtdIns(4,5)P2 (Phosphatidylinositol 4,5-bisphosphate) levels. In the nervous system, plays a protective role together with uex in response to olfactory carbon dioxide stimulation. The sequence is that of PRL-1 phosphatase from Drosophila melanogaster (Fruit fly).